Consider the following 354-residue polypeptide: Ferrochelatase (354 aa).

2 residues coordinate Fe cation: His-204 and Glu-306.

The protein belongs to the ferrochelatase family.

The protein resides in the cytoplasm. It catalyses the reaction heme b + 2 H(+) = protoporphyrin IX + Fe(2+). Its pathway is porphyrin-containing compound metabolism; protoheme biosynthesis; protoheme from protoporphyrin-IX: step 1/1. Its function is as follows. Catalyzes the ferrous insertion into protoporphyrin IX. The sequence is that of Ferrochelatase from Coxiella burnetii (strain CbuK_Q154) (Coxiella burnetii (strain Q154)).